Consider the following 473-residue polypeptide: Spliceosome-associated protein CWC27 homolog (473 aa).

Ser-2 carries the N-acetylserine modification. Residues 11–166 (TNGKVLLKTT…NPHKIKSCEV (156 aa)) form the PPIase cyclophilin-type domain. Positions 177 to 193 (REIKRPKKEKPEEEVKK) are enriched in basic and acidic residues. Disordered regions lie at residues 177 to 386 (REIK…EDQT) and 399 to 473 (QAIA…KERR). Residues 206–230 (SFGEEAEEEEEEVNRVSQSMKGKSK) are a coiled coil. The segment covering 231–241 (SSHDLLKDDPH) has biased composition (basic and acidic residues). Positions 257–275 (GDLDDDGEDESAEYDEYVD) are enriched in acidic residues. 3 stretches are compositionally biased toward basic and acidic residues: residues 276–287 (GDEKNLMRERIA), 305–348 (EVEK…KRSE), and 360–372 (EYRR…EALR). Residues 307 to 378 (EKKSVSRSEE…EALRKQQSKK (72 aa)) are a coiled coil. A Phosphoserine modification is found at Ser-347. A compositionally biased stretch (acidic residues) spans 405 to 419 (PENDIPETEVEDDEG). Composition is skewed to basic and acidic residues over residues 426-438 (QFED…KDAS) and 458-473 (RREE…KERR).

Belongs to the cyclophilin-type PPIase family. In terms of assembly, part of the activated spliceosome B/catalytic step 1 spliceosome, one of the forms of the spliceosome which has a well-formed active site but still cannot catalyze the branching reaction and is composed at least of 52 proteins, the U2, U5 and U6 snRNAs and the pre-mRNA. Recruited during early steps of activated spliceosome B maturation, it is probably one of the first proteins released from this complex as he matures to the spliceosome C complex. Component of the minor spliceosome, which splices U12-type introns.

It localises to the nucleus. As part of the spliceosome, plays a role in pre-mRNA splicing. Probable inactive PPIase with no peptidyl-prolyl cis-trans isomerase activity. As a component of the minor spliceosome, involved in the splicing of U12-type introns in pre-mRNAs. The protein is Spliceosome-associated protein CWC27 homolog of Macaca fascicularis (Crab-eating macaque).